A 274-amino-acid chain; its full sequence is MASISPYGKRFISYLRREQIRRLLATKYRVDGRGPEQTRNVEINVGVVKTADGSAEVKLGKTHVVAGVKVGLGQPFPDAPDEGVLVVNAEVLPHASPYTEVGPPDEFAIELARVVDRGIRHCGYVDFKKLAVEGGKAYVLWIDLYVINDDGNLIDVANLASVAALKNTQLPVVVKDEAGVVKLDRNNKAPLPVDISKAPIAVSVGKIGNVLFLDPTFEEELSLDGRITFTFSEDKIVAAQKTLGYFTQSEIEAALNLALRGRDRLLEALKSALK.

This sequence belongs to the RNase PH family. Rrp42 subfamily. In terms of assembly, component of the archaeal exosome complex. Forms a hexameric ring-like arrangement composed of 3 Rrp41-Rrp42 heterodimers. The hexameric ring associates with a trimer of Rrp4 and/or Csl4 subunits.

The protein localises to the cytoplasm. In terms of biological role, non-catalytic component of the exosome, which is a complex involved in RNA degradation. Contributes to the structuring of the Rrp41 active site. The chain is Exosome complex component Rrp42 from Pyrobaculum aerophilum (strain ATCC 51768 / DSM 7523 / JCM 9630 / CIP 104966 / NBRC 100827 / IM2).